The following is a 1188-amino-acid chain: Adenomatous polyposis coli protein-related protein 1 (1188 aa).

The interval 1–50 (MSSSSSDENETTIHRTGSNTGGSGIYSQPRAGSSKRTSNVRHDVSDVDDE) is disordered. Residues 1–486 (MSSSSSDENE…LSLRATRASP (486 aa)) are required for interaction with bar-1 and hmp-2. Residues 314–358 (NCLKVLASLLSPDARFTSLVDSATGILKYVSQYLANTSTHLELRS) form an ARM repeat. Positions 579 to 588 (IQQQQQMQKA) are enriched in low complexity. Disordered stretches follow at residues 579-624 (IQQQ…SMNP), 670-702 (TESE…DGAT), 726-751 (TPNG…GPSL), 778-952 (QSEM…TMRF), 1003-1092 (CSMI…LKDK), and 1157-1181 (YQKP…PNPK). The interval 600–1188 (DLDIPTSTVM…NPKQMLVTIV (589 aa)) is required for interaction with pry-1. 2 stretches are compositionally biased toward polar residues: residues 604–624 (PTST…SMNP) and 677–701 (LTSQ…SDGA). Composition is skewed to polar residues over residues 778-788 (QSEMPTSSSTP) and 800-811 (FSPTQKTTSSPA). 2 stretches are compositionally biased toward basic and acidic residues: residues 832 to 843 (RRQDASDADRLL) and 871 to 900 (EPER…DHNG). Composition is skewed to polar residues over residues 909–929 (WSPQ…SSED), 937–946 (EPNSSTSGAA), 1014–1039 (QRNE…SASS), and 1164–1180 (GRNN…TPNP).

It belongs to the adenomatous polyposis coli (APC) family. In terms of assembly, interacts (via N-terminus) with bar-1 and hmp-2; the interaction with hmp-2 is relatively weak. Interacts (via C-terminus) with pry-1 (via N-terminus). Probably associates with bar-1, gsk-3, pry-1 in a complex. In terms of tissue distribution, during the L1 stage, expressed in vulval precursor cells (P3-8.p), seam cells and excretory cells.

It is found in the cell junction. It localises to the adherens junction. The protein localises to the cytoplasm. Its subcellular location is the nucleus. Its function is as follows. Has a role in endoderm cell specification and pharyngeal development. Required for the migration of epithelial cells, organization of the anterior seam cells and ceh-13 expression during embryo morphogenesis. Prevents hyperactivation of the Wnt signaling pathway during endoderm development, probably by preventing hmp-2 nuclear translocation. During larval development, apr-1 is required for expression of lin-39 in P3-8.p. Shown to negatively regulate Wnt signaling in vulval precursor cells. Has a role in cell division by establishing the polarity of the mother cell which forms the asymmetries of the daughter nuclei. During the L4 larval stage, it is required for the asymmetric division and self-renewal of seam cells. Thought to regulate export of wrm-1 from the nucleus possibly as part of a complex involving pry-1. In Caenorhabditis elegans, this protein is Adenomatous polyposis coli protein-related protein 1.